We begin with the raw amino-acid sequence, 761 residues long: RNA-binding protein 12B (761 aa).

Ser98, Ser101, and Ser112 each carry phosphoserine. Residue Lys114 forms a Glycyl lysine isopeptide (Lys-Gly) (interchain with G-Cter in SUMO2) linkage. Residues 120-147 (SGYGSSINQDAGFHSNGTGHGNLRPRKT) form a disordered region. A Glycyl lysine isopeptide (Lys-Gly) (interchain with G-Cter in SUMO2) cross-link involves residue Lys151. The region spanning 155-230 (PYLFLRGLPY…RFIEVMQGSE (76 aa)) is the RRM 1 domain. Residues 247–262 (LRRSEEHSPPRGINDR) show a composition bias toward basic and acidic residues. Residues 247–278 (LRRSEEHSPPRGINDRHFRKRSHSKSPRRTRS) form a disordered region. Phosphoserine is present on residues Ser250 and Ser254. A compositionally biased stretch (basic residues) spans 263–278 (HFRKRSHSKSPRRTRS). Thr276 bears the Phosphothreonine mark. Phosphoserine occurs at positions 278, 280, 292, and 294. One can recognise an RRM 2 domain in the interval 284-360 (FYVHLKNLSL…RPVHIDPISR (77 aa)). Position 319 is an N6-acetyllysine (Lys319). Lys335 is covalently cross-linked (Glycyl lysine isopeptide (Lys-Gly) (interchain with G-Cter in SUMO2)). Residues 372-384 (KKRSGSPERDRPG) are compositionally biased toward basic and acidic residues. The tract at residues 372 to 392 (KKRSGSPERDRPGHVSQKYSQ) is disordered. Ser377 bears the Phosphoserine mark. The region spanning 400 to 477 (LCIYIRNFPF…TEVLLRLISE (78 aa)) is the RRM 3 domain. Residues Lys514 and Lys541 each participate in a glycyl lysine isopeptide (Lys-Gly) (interchain with G-Cter in SUMO2) cross-link. Basic and acidic residues predominate over residues 538 to 621 (DNFKHPQRDF…RHPREEDWRR (84 aa)). A disordered region spans residues 538–690 (DNFKHPQRDF…THQMKTSGAL (153 aa)). 2 positions are modified to phosphoserine: Ser575 and Ser591. Residues 627–654 (LQSTSGGHPQSISGGHPQSISGARPRST) are compositionally biased toward polar residues. Residues 661 to 672 (SISGGRLRSISG) are compositionally biased toward low complexity.

This chain is RNA-binding protein 12B (RBM12B), found in Pongo abelii (Sumatran orangutan).